The chain runs to 497 residues: Di-/tripeptide transporter (497 aa).

The Cytoplasmic portion of the chain corresponds to 1-36; sequence MQNLNKTEKTFFGQPRGLLTLFQTEFWERFSYYGMR. Residues 37–55 form a helical membrane-spanning segment; the sequence is AILVYYLYALTTADNAGLG. The Extracellular portion of the chain corresponds to 56-64; it reads LPKAQAMAI. A helical membrane pass occupies residues 65-83; the sequence is VSIYGALVYLSTIVGGWVA. The Cytoplasmic segment spans residues 84 to 92; the sequence is DRLLGASRT. The helical transmembrane segment at 93 to 111 threads the bilayer; it reads IFLGGILITLGHIALATPF. Over 112–115 the chain is Extracellular; it reads GLSS. Residues 116–134 form a helical membrane-spanning segment; it reads LFVALFLIILGTGMLKPNI. Residues 135–154 are Cytoplasmic-facing; sequence SNMVGHLYSKDDSRRDTGFN. A helical membrane pass occupies residues 155–173; that stretch reads IFVVGINMGSLIAPLIVGT. Topologically, residues 174-181 are extracellular; that stretch reads VGQGVNYH. The chain crosses the membrane as a helical span at residues 182-200; the sequence is LGFSLAAIGMIFALFAYWY. The Cytoplasmic segment spans residues 201-224; that stretch reads GRLRHFPEIGREPSNPMDSKARRN. Residues 225–243 traverse the membrane as a helical segment; that stretch reads FLITLTIVVIVAIIGFFLL. Residues 244 to 254 are Extracellular-facing; that stretch reads YQASPANFINN. Residues 255 to 273 traverse the membrane as a helical segment; sequence FINVLSIIGIVVPIIYFVM. The Cytoplasmic segment spans residues 274–293; the sequence is MFTSKKVESDERRKLTAYIP. The chain crosses the membrane as a helical span at residues 294-312; it reads LFLSAIVFWAIEEQSSTII. Over 313–335 the chain is Extracellular; it reads AVWGESRSNLDPTWFGITFHIDP. The chain crosses the membrane as a helical span at residues 336–354; sequence SWYQLLNPLFIVLLSPIFV. At 355–372 the chain is on the cytoplasmic side; sequence RLWNKLGERQPSTIVKFG. The chain crosses the membrane as a helical span at residues 373–391; the sequence is LGLMLTGISYLIMTLPGLL. Residues 392–425 lie on the Extracellular side of the membrane; sequence NGTSGRASALWLVLMFAVQMAGELLVSPVGLSVS. Residues 426-444 traverse the membrane as a helical segment; sequence TKLAPVAFQSQMMAMWFLA. Topologically, residues 445–497 are cytoplasmic; the sequence is DSTSQAINAQITPLFKAATEVHFFAITGIIGIIVGIILLIVKKPILKLMGDVR.

Belongs to the major facilitator superfamily. Proton-dependent oligopeptide transporter (POT/PTR) (TC 2.A.17) family.

The protein resides in the cell membrane. In terms of biological role, proton-dependent uptake of di- or tri-peptides. This is Di-/tripeptide transporter (dtpT) from Lactococcus lactis subsp. lactis (strain IL1403) (Streptococcus lactis).